The following is a 169-amino-acid chain: Ribosome maturation factor RimM (169 aa).

In terms of domain architecture, PRC barrel spans 94-168 (DDEFYHADLI…RIVADPPEGL (75 aa)).

Belongs to the RimM family. Binds ribosomal protein uS19.

It is found in the cytoplasm. Its function is as follows. An accessory protein needed during the final step in the assembly of 30S ribosomal subunit, possibly for assembly of the head region. Essential for efficient processing of 16S rRNA. May be needed both before and after RbfA during the maturation of 16S rRNA. It has affinity for free ribosomal 30S subunits but not for 70S ribosomes. The chain is Ribosome maturation factor RimM from Cereibacter sphaeroides (strain ATCC 17029 / ATH 2.4.9) (Rhodobacter sphaeroides).